Here is a 226-residue protein sequence, read N- to C-terminus: ATP synthase F(0) complex subunit a (226 aa).

6 helical membrane passes run 6-26 (FASF…IIMF), 68-88 (WSLM…LGLL), 97-117 (QLSM…ITGF), 138-158 (IPML…ALAV), 164-184 (ITAG…LTSI), and 189-209 (AILT…VALI).

It belongs to the ATPase A chain family. As to quaternary structure, component of the ATP synthase complex composed at least of ATP5F1A/subunit alpha, ATP5F1B/subunit beta, ATP5MC1/subunit c (homooctomer), MT-ATP6/subunit a, MT-ATP8/subunit 8, ATP5ME/subunit e, ATP5MF/subunit f, ATP5MG/subunit g, ATP5MK/subunit k, ATP5MJ/subunit j, ATP5F1C/subunit gamma, ATP5F1D/subunit delta, ATP5F1E/subunit epsilon, ATP5PF/subunit F6, ATP5PB/subunit b, ATP5PD/subunit d, ATP5PO/subunit OSCP. ATP synthase complex consists of a soluble F(1) head domain (subunits alpha(3) and beta(3)) - the catalytic core - and a membrane F(0) domain - the membrane proton channel (subunits c, a, 8, e, f, g, k and j). These two domains are linked by a central stalk (subunits gamma, delta, and epsilon) rotating inside the F1 region and a stationary peripheral stalk (subunits F6, b, d, and OSCP). Interacts with DNAJC30; interaction is direct.

It localises to the mitochondrion inner membrane. It carries out the reaction H(+)(in) = H(+)(out). Subunit a, of the mitochondrial membrane ATP synthase complex (F(1)F(0) ATP synthase or Complex V) that produces ATP from ADP in the presence of a proton gradient across the membrane which is generated by electron transport complexes of the respiratory chain. ATP synthase complex consist of a soluble F(1) head domain - the catalytic core - and a membrane F(1) domain - the membrane proton channel. These two domains are linked by a central stalk rotating inside the F(1) region and a stationary peripheral stalk. During catalysis, ATP synthesis in the catalytic domain of F(1) is coupled via a rotary mechanism of the central stalk subunits to proton translocation. With the subunit c (ATP5MC1), forms the proton-conducting channel in the F(0) domain, that contains two crucial half-channels (inlet and outlet) that facilitate proton movement from the mitochondrial intermembrane space (IMS) into the matrix. Protons are taken up via the inlet half-channel and released through the outlet half-channel, following a Grotthuss mechanism. This Ictidomys tridecemlineatus (Thirteen-lined ground squirrel) protein is ATP synthase F(0) complex subunit a.